We begin with the raw amino-acid sequence, 251 residues long: Zinc import ATP-binding protein ZnuC (251 aa).

Residues 5 to 220 enclose the ABC transporter domain; the sequence is VSLENVSVSF…PEFISMFGPR (216 aa). Residue 37 to 44 coordinates ATP; that stretch reads GPNGAGKS.

Belongs to the ABC transporter superfamily. Zinc importer (TC 3.A.1.15.5) family. As to quaternary structure, the complex is composed of two ATP-binding proteins (ZnuC), two transmembrane proteins (ZnuB) and a solute-binding protein (ZnuA).

It is found in the cell inner membrane. The enzyme catalyses Zn(2+)(out) + ATP(in) + H2O(in) = Zn(2+)(in) + ADP(in) + phosphate(in) + H(+)(in). Part of the ABC transporter complex ZnuABC involved in zinc import. Responsible for energy coupling to the transport system. The protein is Zinc import ATP-binding protein ZnuC of Shigella flexneri serotype 5b (strain 8401).